We begin with the raw amino-acid sequence, 54 residues long: Rubredoxin (54 aa).

Residues 2–52 (AKWVCKICGYIYDEDAGDPDNGISPGTKFEELPDDWVCPICGAPKSEFEKL) form the Rubredoxin-like domain. Fe cation is bound by residues Cys-6, Cys-9, Cys-39, and Cys-42.

The protein belongs to the rubredoxin family. It depends on Fe(3+) as a cofactor.

In terms of biological role, rubredoxin is a small nonheme, iron protein lacking acid-labile sulfide. Its single Fe, chelated to 4 Cys, functions as an electron acceptor and may also stabilize the conformation of the molecule. This chain is Rubredoxin (rub), found in Pyrococcus furiosus (strain ATCC 43587 / DSM 3638 / JCM 8422 / Vc1).